The primary structure comprises 66 residues: Large ribosomal subunit protein bL35 (66 aa).

The interval 21 to 40 is disordered; it reads KIKSTQSAKRHGMTKRSKRS. Residues 28–40 are compositionally biased toward basic residues; that stretch reads AKRHGMTKRSKRS.

The protein belongs to the bacterial ribosomal protein bL35 family.

The polypeptide is Large ribosomal subunit protein bL35 (Ehrlichia canis (strain Jake)).